The primary structure comprises 125 residues: Fumarate reductase subunit D (125 aa).

Transmembrane regions (helical) follow at residues 30–50 (FAMI…LGVI), 63–83 (FATS…PMWH), and 105–125 (IACY…IFMI).

This sequence belongs to the FrdD family. As to quaternary structure, part of an enzyme complex containing four subunits: a flavoprotein (FrdA), an iron-sulfur protein (FrdB), and two hydrophobic anchor proteins (FrdC and FrdD).

It is found in the cell inner membrane. In terms of biological role, anchors the catalytic components of the fumarate reductase complex to the cell membrane, binds quinones. This Vibrio campbellii (strain ATCC BAA-1116) protein is Fumarate reductase subunit D.